Reading from the N-terminus, the 257-residue chain is Gamma-secretase subunit APH-1B (257 aa).

7 helical membrane-spanning segments follow: residues 5 to 25 (VFFGCAFIAFGPALALYVFTI), 32 to 52 (VIFLIAGAFFWLVSLLLSSVF), 66 to 86 (PVQNYLLIFGVLLSVCIQELF), 115 to 135 (LLAYVSGLGFGIMSGVFSFVN), 160 to 180 (AFMTLVVIMLHVFWGVVFFDG), 186 to 206 (WYTLLTVLLTHLVVSTQTFLS), and 213 to 233 (LVTAYIIMVLMGIWAFYVAGG).

This sequence belongs to the APH-1 family. Probable component of the gamma-secretase complex, a complex composed of a presenilin homodimer (PSEN1 or PSEN2), nicastrin (NCSTN), APH1 (APH1A or APH1B) and PEN2. Such minimal complex is sufficient for secretase activity, although other components may exist. Interacts with PSEN1 and PSEN2.

Its subcellular location is the membrane. In terms of biological role, probable subunit of the gamma-secretase complex, an endoprotease complex that catalyzes the intramembrane cleavage of integral proteins such as Notch receptors and APP (amyloid-beta precursor protein). It probably represents a stabilizing cofactor for the presenilin homodimer that promotes the formation of a stable complex. Probably present in a minority of gamma-secretase complexes compared to APH1A. This is Gamma-secretase subunit APH-1B (Aph1b) from Mus musculus (Mouse).